Here is a 338-residue protein sequence, read N- to C-terminus: MIQLENIEKHYESKKRRVIGVDQVSLDIKKGEIYGIVGYSGAGKSTLLRCMNVLERPTKGRVFVDGIDLLELNNKQLRKARQSIGMIFQGFYLVSSKTVVENVSFALKAAGVGKLERNKRALELLNLVGIEDKANQYPSQLSGGQKQRVSIARALANNPKVLLCDEATSALDPSTTKSILKLLKKINEQIGITIVIITHEMEVVKEICDRCAVMQNGKVIENGKTYDIFSDPNEKLTKDFIHTVLDFQLPEALLKQCNGTLLKLQFRGDIAAESVVSDMLQQHKVKGNILHGKVEYIKDKPLGVFIMEVSGDPSEISSAISYLEERIKQVEVIQHVSY.

The ABC transporter domain occupies 2–241 (IQLENIEKHY…PNEKLTKDFI (240 aa)). 38-45 (GYSGAGKS) lines the ATP pocket.

The protein belongs to the ABC transporter superfamily. Methionine importer (TC 3.A.1.24) family. As to quaternary structure, the complex is composed of two ATP-binding proteins (MetN), two transmembrane proteins (MetI) and a solute-binding protein (MetQ).

The protein localises to the cell membrane. It catalyses the reaction L-methionine(out) + ATP + H2O = L-methionine(in) + ADP + phosphate + H(+). The catalysed reaction is D-methionine(out) + ATP + H2O = D-methionine(in) + ADP + phosphate + H(+). In terms of biological role, part of the ABC transporter complex MetNIQ involved in methionine import. Responsible for energy coupling to the transport system. In Oceanobacillus iheyensis (strain DSM 14371 / CIP 107618 / JCM 11309 / KCTC 3954 / HTE831), this protein is Methionine import ATP-binding protein MetN 1.